A 345-amino-acid polypeptide reads, in one-letter code: Ribosome production factor 1 (345 aa).

Disordered regions lie at residues 1 to 57 and 70 to 105; these read MAKA…ISEI and WKQQ…PKTI. Over residues 87–97 the composition is skewed to basic and acidic residues; sequence REREALGDKAP. The 184-residue stretch at 142–325 folds into the Brix domain; sequence PKILITTSDR…LRSLQKGTFD (184 aa). Residues 303 to 320 are RNA-binding; the sequence is VGIQELGPRFTLKLRSLQ.

It is found in the nucleus. The protein localises to the nucleolus. Its function is as follows. May be required for ribosome biogenesis. This is Ribosome production factor 1 (Rpf1) from Rattus norvegicus (Rat).